The following is a 511-amino-acid chain: Ribonuclease E/G-like protein (511 aa).

Residues 35–117 enclose the S1 motif domain; that stretch reads SDIYLGTVDK…LTANITLSGR (83 aa). The Mg(2+) site is built by Asp296 and Asp339.

This sequence belongs to the RNase E/G family. Mg(2+) is required as a cofactor.

It localises to the plastid. The protein resides in the chloroplast stroma. Its function is as follows. Involved in intercistronic processing of primary transcripts from chloroplast operons. The endonucleolytic activity of the enzyme depends on the number of phosphates at the 5' end, is inhibited by structured RNA, and preferentially cleaves A/U-rich sequences. The chain is Ribonuclease E/G-like protein (rne) from Porphyra purpurea (Red seaweed).